The primary structure comprises 302 residues: Sulfotransferase 1C4 (302 aa).

55-60 contributes to the 3'-phosphoadenylyl sulfate binding site; sequence KAGTTW. 113–115 serves as a coordination point for substrate; that stretch reads KTH. His115 serves as the catalytic Proton acceptor. 3'-phosphoadenylyl sulfate is bound by residues Arg137, Ser145, Tyr200, 234–239, and 262–266; these read TSFDVM and FMRKG.

Belongs to the sulfotransferase 1 family. As to expression, expressed at high levels in fetal lung and kidney and at low levels in fetal heart, adult kidney, ovary and spinal cord.

The protein localises to the cytoplasm. Its subcellular location is the cytosol. It catalyses the reaction a phenol + 3'-phosphoadenylyl sulfate = an aryl sulfate + adenosine 3',5'-bisphosphate + H(+). It carries out the reaction 17beta-estradiol + 3'-phosphoadenylyl sulfate = 17beta-estradiol 3-sulfate + adenosine 3',5'-bisphosphate + H(+). The enzyme catalyses bisphenol A + 3'-phosphoadenylyl sulfate = bisphenyl A sulfate + adenosine 3',5'-bisphosphate + H(+). Sulfotransferase that utilizes 3'-phospho-5'-adenylyl sulfate (PAPS) as sulfonate donor to catalyze the sulfate conjugation of phenolic compounds. Can also sulfonate estrogenic compounds, however, the dietary flavonoids (phytoestrogen) and environmental estrogens, like bisphenol A are better substrates than 17beta-estradiol (E2). Mediates the sulfation of doxorubicin and its analog epirubicin, two antitumor anthracyclines. In Homo sapiens (Human), this protein is Sulfotransferase 1C4.